A 226-amino-acid polypeptide reads, in one-letter code: MGIRAIVVDTAGTTTDLTFIQDVLFPYSVKALPDFLAQNQHNVLVENCICDTRDIALEPDADLNRVTEILQQWVREDRKATPLKTLQGLIWKQGYAHDEFKGHIFPDFIEAVKRFSAQNLRIYSFSSGSVDAQKLLFSHSDGGDLTEMFNGHFDTRTGNKLDKQAYCNILNTISLSPKQVLFVSDVIEELKAADAAGMMTCQMVRDSKQRTGDFRTINSFDKLVIE.

The protein belongs to the HAD-like hydrolase superfamily. MasA/MtnC family. In terms of assembly, monomer. It depends on Mg(2+) as a cofactor.

It catalyses the reaction 5-methylsulfanyl-2,3-dioxopentyl phosphate + H2O = 1,2-dihydroxy-5-(methylsulfanyl)pent-1-en-3-one + phosphate. It participates in amino-acid biosynthesis; L-methionine biosynthesis via salvage pathway; L-methionine from S-methyl-5-thio-alpha-D-ribose 1-phosphate: step 3/6. Its pathway is amino-acid biosynthesis; L-methionine biosynthesis via salvage pathway; L-methionine from S-methyl-5-thio-alpha-D-ribose 1-phosphate: step 4/6. Bifunctional enzyme that catalyzes the enolization of 2,3-diketo-5-methylthiopentyl-1-phosphate (DK-MTP-1-P) into the intermediate 2-hydroxy-3-keto-5-methylthiopentenyl-1-phosphate (HK-MTPenyl-1-P), which is then dephosphorylated to form the acireductone 1,2-dihydroxy-3-keto-5-methylthiopentene (DHK-MTPene). This Shewanella oneidensis (strain ATCC 700550 / JCM 31522 / CIP 106686 / LMG 19005 / NCIMB 14063 / MR-1) protein is Enolase-phosphatase E1.